The primary structure comprises 870 residues: DNA mismatch repair protein MutS (870 aa).

An ATP-binding site is contributed by 608 to 615 (GPNMAGKS).

This sequence belongs to the DNA mismatch repair MutS family.

This protein is involved in the repair of mismatches in DNA. It is possible that it carries out the mismatch recognition step. This protein has a weak ATPase activity. The sequence is that of DNA mismatch repair protein MutS from Persephonella marina (strain DSM 14350 / EX-H1).